The sequence spans 291 residues: Aspartate carbamoyltransferase catalytic subunit (291 aa).

Positions 47 and 48 each coordinate carbamoyl phosphate. Lysine 75 lines the L-aspartate pocket. Carbamoyl phosphate contacts are provided by arginine 97, histidine 126, and glutamine 129. L-aspartate is bound by residues arginine 159 and arginine 213. The carbamoyl phosphate site is built by glycine 251 and proline 252.

This sequence belongs to the aspartate/ornithine carbamoyltransferase superfamily. ATCase family. Heterododecamer (2C3:3R2) of six catalytic PyrB chains organized as two trimers (C3), and six regulatory PyrI chains organized as three dimers (R2).

It carries out the reaction carbamoyl phosphate + L-aspartate = N-carbamoyl-L-aspartate + phosphate + H(+). It participates in pyrimidine metabolism; UMP biosynthesis via de novo pathway; (S)-dihydroorotate from bicarbonate: step 2/3. In terms of biological role, catalyzes the condensation of carbamoyl phosphate and aspartate to form carbamoyl aspartate and inorganic phosphate, the committed step in the de novo pyrimidine nucleotide biosynthesis pathway. This is Aspartate carbamoyltransferase catalytic subunit from Aquifex aeolicus (strain VF5).